A 461-amino-acid polypeptide reads, in one-letter code: tRNA modification GTPase MnmE (461 aa).

(6S)-5-formyl-5,6,7,8-tetrahydrofolate contacts are provided by lysine 32, glutamate 89, and lysine 128. A TrmE-type G domain is found at 224 to 387 (GHALSIVGKP…LSQKISEFFP (164 aa)). Residue asparagine 234 coordinates K(+). GTP is bound by residues 234-239 (NAGKSS), 253-259 (SDIKGTT), and 278-281 (DTAG). Serine 238 is a Mg(2+) binding site. Residues serine 253, isoleucine 255, and threonine 258 each coordinate K(+). Threonine 259 is a Mg(2+) binding site. Lysine 461 contacts (6S)-5-formyl-5,6,7,8-tetrahydrofolate.

This sequence belongs to the TRAFAC class TrmE-Era-EngA-EngB-Septin-like GTPase superfamily. TrmE GTPase family. Homodimer. Heterotetramer of two MnmE and two MnmG subunits. It depends on K(+) as a cofactor.

It is found in the cytoplasm. Exhibits a very high intrinsic GTPase hydrolysis rate. Involved in the addition of a carboxymethylaminomethyl (cmnm) group at the wobble position (U34) of certain tRNAs, forming tRNA-cmnm(5)s(2)U34. In Helicobacter pylori (strain J99 / ATCC 700824) (Campylobacter pylori J99), this protein is tRNA modification GTPase MnmE.